A 430-amino-acid chain; its full sequence is Ribosomal protein uS12 methylthiotransferase RimO (430 aa).

The region spanning 2–118 (AKIFTISLGC…IDNVIKRPKH (117 aa)) is the MTTase N-terminal domain. Positions 11, 47, 81, 150, 154, and 157 each coordinate [4Fe-4S] cluster. The region spanning 136 to 368 (LTAPHSAYLK…AQSRVIDSIN (233 aa)) is the Radical SAM core domain. The TRAM domain occupies 369–430 (RKLKGKTVKV…KGYNRTGKII (62 aa)).

This sequence belongs to the methylthiotransferase family. RimO subfamily. [4Fe-4S] cluster is required as a cofactor.

Its subcellular location is the cytoplasm. It catalyses the reaction L-aspartate(89)-[ribosomal protein uS12]-hydrogen + (sulfur carrier)-SH + AH2 + 2 S-adenosyl-L-methionine = 3-methylsulfanyl-L-aspartate(89)-[ribosomal protein uS12]-hydrogen + (sulfur carrier)-H + 5'-deoxyadenosine + L-methionine + A + S-adenosyl-L-homocysteine + 2 H(+). Functionally, catalyzes the methylthiolation of an aspartic acid residue of ribosomal protein uS12. This chain is Ribosomal protein uS12 methylthiotransferase RimO, found in Elusimicrobium minutum (strain Pei191).